We begin with the raw amino-acid sequence, 1595 residues long: MGVPTKISILGRESIVADFGIWRNYVAKDLLSSCSSSTYILISDTNLTPLYLEGFQRSFEDAATNVSPKPRLLTYEIPPGESSKSRETKADIEDWMLARQPPCGRDTVIIALGGGVIGDLIGFVAATYMRGVRFVQVPTTLLAMVDSSIGGKTAIDTPNGKNLIGAIWQPQRIYLDMEFLNTLPEREFINGMAEVIKTAAISSDEKFAALERDAETILAAVKSKNTPERPRFSGIEETLKRTILSSAEFKAQVVSADEREGGLRNLLNFGHSIGHAIEAILAPQVLHGECVSIGMVKEAELARHLGILNNVSVSRISKCLASYGLPTSLKDQRIKKLTAGKHCSVEQLIAYMGVDKKNDGPKKKVVLLSAIGRTHEPRASTVSNEEIQIVLAPSIEVSPGVPKGLDVTCTPPGSKSISNRALVLAALGSGTCRLKNLLHSDDTEVMLNALERLGAATFSWEDEGEVLVVSGKGGRMEASPSELYLGNAGTASRFLTTVATLARKSSVDSSVLTGNARMKQRPIGDLVDALAANGASIEYLENLGCLPLKIASSGGFAGGEINLAAKVSSQYVSSLLMCAPYAKTPVTLRLVGGKPISQPYIDMTTAMMRSFGVEVKKSETEEHTYHIPLGFYTNPVEYIVESDASSATYPLAAAAITGTSCTVPNIGSKSLQGDARFAVDVLRPMGCAVDQSDFSTRVTGPPGGILSPLPNIDMEPMTDAFLTASVLAAVARGKGSNHTTRIFGIANQRVKECNRIKAMKDELAEFGVVCREHDDGLEIDGIDRATLHHPSDGVYCYDDHRVAMSFSVLSLVTPEPTLILEKECVGKTWPGWWDSLAQTFKVKLDGKEVGKRTETNPIVHVNKSAASIFIIGMRGAGKTTSGFWVSKALQRPFIDLDDELERTEGMTIPEIIKQRGWGGFREAELSLLRRVMTEKPTGYIFACGGGVVETPEARKLLTQYHKTTGNVILVMRDIKEIMDFLKIDKTRPAYVEDMMSVWLRRKPWYEECSNVQYYSRLTGLDGMTQVSGGFNRFLKVITGEVDSLAKMRRKENTFFVSLTLPDLSLAAHILKEVTLGSDAVELRVDLLKDPQSDNEIPSVDYVAEQISVLRSRTSVPLVFTIRTKGQGGRFPDDAYDAALQLYRLAVRMGSEFVDLEISFPEQLLRTVTEMKGFSKIITSHHDPKGQLSWVNGSWIQFYNKALQYGDVIKLVGVARSIDDNISLKKFKTWAEEKHNVPIIAINMGDKGQLSRMLNGFMTPVSHPSLPFKAAPGQLSAREIRKGLSLIGEIKAKKFAVIGNPVSASRSPAMHNTLFRQMGLPHTYGTLETDNPEVAKEFIRSPGFGGASVTIPLKISIMPLLDEIAPEAMSIGAVNTIVCAPPAPDGKSQTPRLIGHNTDWQGMVRCLSDAGAYAAATPTTASAGLVIGGGGTARAAIFALQNMGYSPIYVLGRSPDKLSSMTSTFHTDHDIRILEDVKALESLPTVAIGTIPGDKPIEPHMREILCRLFDLCEKANSDTEQARGVSTKRILLEMAYKPSVTSLMQLASDSGWTVLPGLEALVAQGVYQCEYWTNITPVYEYARNAVMGVSPSEDIL.

Residues 1–384 (MGVPTKISIL…HEPRASTVSN (384 aa)) form a 3-dehydroquinate synthase region. NAD(+) is bound by residues 44–46 (DTN), 81–84 (ESSK), 114–116 (GGV), and Asp119. Residue Arg130 participates in 7-phospho-2-dehydro-3-deoxy-D-arabino-heptonate binding. Residue 139-140 (TT) coordinates NAD(+). 2 residues coordinate 7-phospho-2-dehydro-3-deoxy-D-arabino-heptonate: Asp146 and Lys152. Lys161 is a binding site for NAD(+). Asn162 contributes to the 7-phospho-2-dehydro-3-deoxy-D-arabino-heptonate binding site. Residues 179 to 182 (FLNT) and Asn190 contribute to the NAD(+) site. Glu194 serves as a coordination point for Zn(2+). 7-phospho-2-dehydro-3-deoxy-D-arabino-heptonate-binding positions include 194–197 (EVIK) and Lys250. The Proton acceptor; for 3-dehydroquinate synthase activity role is filled by Glu260. Residues 264-268 (RNLLN) and His271 each bind 7-phospho-2-dehydro-3-deoxy-D-arabino-heptonate. His271 is a Zn(2+) binding site. His275 functions as the Proton acceptor; for 3-dehydroquinate synthase activity in the catalytic mechanism. The 7-phospho-2-dehydro-3-deoxy-D-arabino-heptonate site is built by His287 and Lys356. Residue His287 coordinates Zn(2+). Positions 397-842 (VSPGVPKGLD…WDSLAQTFKV (446 aa)) are EPSP synthase. Residue Cys824 is the For EPSP synthase activity of the active site. Residues 866-1057 (ASIFIIGMRG…RRKENTFFVS (192 aa)) form a shikimate kinase region. An ATP-binding site is contributed by 872-879 (GMRGAGKT). Residues 1058-1278 (LTLPDLSLAA…AAPGQLSARE (221 aa)) form a 3-dehydroquinase region. His1181 functions as the Proton acceptor; for 3-dehydroquinate dehydratase activity in the catalytic mechanism. The active-site Schiff-base intermediate with substrate; for 3-dehydroquinate dehydratase activity is Lys1209. The shikimate dehydrogenase stretch occupies residues 1291 to 1595 (AKKFAVIGNP…MGVSPSEDIL (305 aa)).

This sequence in the N-terminal section; belongs to the sugar phosphate cyclases superfamily. Dehydroquinate synthase family. It in the 2nd section; belongs to the EPSP synthase family. The protein in the 3rd section; belongs to the shikimate kinase family. In the 4th section; belongs to the type-I 3-dehydroquinase family. This sequence in the C-terminal section; belongs to the shikimate dehydrogenase family. Homodimer. Requires Zn(2+) as cofactor.

It localises to the cytoplasm. The enzyme catalyses 7-phospho-2-dehydro-3-deoxy-D-arabino-heptonate = 3-dehydroquinate + phosphate. The catalysed reaction is 3-dehydroquinate = 3-dehydroshikimate + H2O. It carries out the reaction shikimate + NADP(+) = 3-dehydroshikimate + NADPH + H(+). It catalyses the reaction shikimate + ATP = 3-phosphoshikimate + ADP + H(+). The enzyme catalyses 3-phosphoshikimate + phosphoenolpyruvate = 5-O-(1-carboxyvinyl)-3-phosphoshikimate + phosphate. The protein operates within metabolic intermediate biosynthesis; chorismate biosynthesis; chorismate from D-erythrose 4-phosphate and phosphoenolpyruvate: step 2/7. It participates in metabolic intermediate biosynthesis; chorismate biosynthesis; chorismate from D-erythrose 4-phosphate and phosphoenolpyruvate: step 3/7. Its pathway is metabolic intermediate biosynthesis; chorismate biosynthesis; chorismate from D-erythrose 4-phosphate and phosphoenolpyruvate: step 4/7. It functions in the pathway metabolic intermediate biosynthesis; chorismate biosynthesis; chorismate from D-erythrose 4-phosphate and phosphoenolpyruvate: step 5/7. The protein operates within metabolic intermediate biosynthesis; chorismate biosynthesis; chorismate from D-erythrose 4-phosphate and phosphoenolpyruvate: step 6/7. The AROM polypeptide catalyzes 5 consecutive enzymatic reactions in prechorismate polyaromatic amino acid biosynthesis. The polypeptide is Pentafunctional AROM polypeptide (Ajellomyces capsulatus (strain G186AR / H82 / ATCC MYA-2454 / RMSCC 2432) (Darling's disease fungus)).